A 323-amino-acid polypeptide reads, in one-letter code: Annexin A3 (323 aa).

A2 carries the post-translational modification N-acetylalanine. 4 Annexin repeats span residues 18–89, 90–161, 173–245, and 249–320; these read FSPS…ALVT, PPAV…TLAD, HLAK…AIVN, and NTPA…KICG. T267 carries the phosphothreonine modification.

It belongs to the annexin family.

Its function is as follows. Inhibitor of phospholipase A2, also possesses anti-coagulant properties. Also cleaves the cyclic bond of inositol 1,2-cyclic phosphate to form inositol 1-phosphate. This Homo sapiens (Human) protein is Annexin A3 (ANXA3).